Here is a 442-residue protein sequence, read N- to C-terminus: MLDNFTSSQTTKEFSVSEISNKIKELLENNFGYIKVKGEISGLKIASSGHAYFNLKENTAILACTCWRPILAKIKFPLNDGMEVVISGKLSSYAGNSRYQLSVENLQPAGLGAMVQILNERKARLEKEGLFNKIRKPIPFLPNKIGVITSITGAVIQDIIHRIRERFPTHVIIWPVSVQGENSGNEIAEAIDGFNKLEEANKPDVIIVARGGGSIEDLWSFNDEVLVRATYNSKIPIISAVGHEVDYTLIDLAADKRAPTPTAAAEFAVPVRSILNSTLQSYEKVLVTNTKQLVKNHEQAITNYDKINRYLAHYINHKQQLLDETGFNLLDSLPCLISLKETKLKSFSKERIHPHKIITYKTLELTHKAAYIIKSANNTLKNFEYKLELNSLLLLSLDYHNVLKRGFAIVKGESGNFVSSKTTTEKVLNIQFFDGNIKAVRD.

The protein belongs to the XseA family. As to quaternary structure, heterooligomer composed of large and small subunits.

It is found in the cytoplasm. It catalyses the reaction Exonucleolytic cleavage in either 5'- to 3'- or 3'- to 5'-direction to yield nucleoside 5'-phosphates.. In terms of biological role, bidirectionally degrades single-stranded DNA into large acid-insoluble oligonucleotides, which are then degraded further into small acid-soluble oligonucleotides. This Rickettsia bellii (strain OSU 85-389) protein is Exodeoxyribonuclease 7 large subunit.